The chain runs to 1076 residues: Vacuolar membrane protease (1076 aa).

Residues 1–11 (MKCYNPSAFVP) are Cytoplasmic-facing. Residues 12–32 (MAVTLVTVVIYLGVFIPLLII) form a helical membrane-spanning segment. Over 33–437 (HETVPSAPDD…TVFAVFRLRT (405 aa)) the chain is Vacuolar. Asn50, Asn99, and Asn156 each carry an N-linked (GlcNAc...) asparagine glycan. The Zn(2+) site is built by His220 and Asp232. Glu266 serves as the catalytic Proton acceptor. The Zn(2+) site is built by Glu267, Glu292, and His364. Residues 438–458 (LFAWSLTLLIASPLILFAVSY) traverse the membrane as a helical segment. Over 459–491 (LLNRQEKFYFFAGSIKSKNPEDEPISLGGWRGA) the chain is Cytoplasmic. A helical membrane pass occupies residues 492 to 512 (FRFPITLFITSAITFACASLI). Topologically, residues 513-525 (NKINPMIIYSSPY) are vacuolar. The helical transmembrane segment at 526 to 546 (AVWSMSATLFFSVFWFIMAGC) threads the bilayer. Topologically, residues 547–556 (NFVRPSALQR) are cytoplasmic. Residues 557–577 (GYAFMWMFVFGWILLVVATVY) form a helical membrane-spanning segment. Over 578–584 (EDRFKIS) the chain is Vacuolar. A helical membrane pass occupies residues 585–605 (GGYLFVFYEAAIFLATLIAIC). The Cytoplasmic portion of the chain corresponds to 606–738 (EQFALPRKST…LPIWTWLVQY (133 aa)). Disordered regions lie at residues 619 to 662 (DSQN…EETV) and 701 to 720 (SYDGPADHDDKKGHKKHPYG). Residues 621 to 632 (QNDHSDNQDHHH) are compositionally biased toward basic and acidic residues. Residues 647-660 (PNADDEAAEEDQEE) show a composition bias toward acidic residues. The helical transmembrane segment at 739–759 (LLVGPFILVILGQVGLFLVAA) threads the bilayer. The Vacuolar portion of the chain corresponds to 760–771 (LHQTGTDGSPLF). The helical transmembrane segment at 772 to 792 (LPYLIVAIFSILLLLPVTPFI) threads the bilayer. Residues 793–799 (HRLTHHM) lie on the Cytoplasmic side of the membrane. The chain crosses the membrane as a helical span at residues 800-820 (PTFFFLVFIGTLIYNLVAFPF). At 821–1076 (SPNNRYKAYF…LGLAFLLAYV (256 aa)) the chain is on the vacuolar side. N-linked (GlcNAc...) asparagine glycosylation is present at Asn912.

This sequence belongs to the peptidase M28 family. It depends on Zn(2+) as a cofactor.

The protein resides in the vacuole membrane. Functionally, may be involved in vacuolar sorting and osmoregulation. The protein is Vacuolar membrane protease of Sclerotinia sclerotiorum (strain ATCC 18683 / 1980 / Ss-1) (White mold).